A 202-amino-acid chain; its full sequence is AFG2-interacting ribosome maturation factor (202 aa).

In terms of assembly, part of the 55LCC heterohexameric ATPase complex. Does not associate with pre-60S ribosomal particles.

The protein resides in the nucleus. The protein localises to the cytoplasm. In terms of biological role, part of the 55LCC heterohexameric ATPase complex which is chromatin-associated and promotes replisome proteostasis to maintain replication fork progression and genome stability. Required for replication fork progression, sister chromatid cohesion, and chromosome stability. The ATPase activity is specifically enhanced by replication fork DNA and is coupled to cysteine protease-dependent cleavage of replisome substrates in response to replication fork damage. Uses ATPase activity to process replisome substrates in S-phase, facilitating their proteolytic turnover from chromatin to ensure DNA replication and mitotic fidelity. Involved in the cytoplasmic maturation steps of pre-60S ribosomal particles by promoting the release of shuttling protein RSL24D1/RLP24 from the pre-ribosomal particles. Plays an essential role in early embryonic development. The polypeptide is AFG2-interacting ribosome maturation factor (airim) (Danio rerio (Zebrafish)).